A 398-amino-acid polypeptide reads, in one-letter code: MKRKIYKLLICATIATSLWAVRTTKVYAWDGKADGTGTHAMIATQGVTILENDLSSNEPEVIRNNLEILKQNMHDLQLGSTYPDYDKNAYDLYQDHFWDPDTDNNFTKDSKWYLSYSIPDTAESQIRKFSALARYEWKRGNYKQATFYLGEAMHYFGDADTPYHAANVTAVDSPGHVKFETFAEDRKDQYKINTTGSKTNDAFYSNILTNEDFNSWSKEFARSFAKTAKDLYYSHANMSCSWDEWDYAAKVALANSQKGTSGYIYRFLHDVSDGKDSSANKNVNELVAYITTGGEKYAGTDDYMYFGIKTKDGQTQEWTMDNPGNDFMTGSQDTYTFKLKDKNLKIDDIQNMWIRKSKYTEFGDDYKPANIKVIANGNVVLNKDINEWISGNSTYNIK.

The first 28 residues, 1-28, serve as a signal peptide directing secretion; that stretch reads MKRKIYKLLICATIATSLWAVRTTKVYA. Residues Trp-29, His-39, Asp-84, His-96, His-154, Asp-158, His-164, His-176, and Glu-180 each coordinate Zn(2+). Residues 29 to 278 form the Zn-dependent PLC domain; it reads WDGKADGTGT…HDVSDGKDSS (250 aa). The linker stretch occupies residues 275-283; sequence KDSSANKNV. Positions 284-398 constitute a PLAT domain; sequence NELVAYITTG…ISGNSTYNIK (115 aa). Ca(2+) contacts are provided by Gly-299, Thr-300, Asp-301, Asp-321, Asn-322, Gly-324, Asn-325, Asp-326, and Asp-365.

Ca(2+) serves as cofactor. The cofactor is Zn(2+).

It is found in the secreted. The catalysed reaction is a 1,2-diacyl-sn-glycero-3-phosphocholine + H2O = phosphocholine + a 1,2-diacyl-sn-glycerol + H(+). Its function is as follows. Bacterial hemolysins are exotoxins that attack blood cell membranes and cause cell rupture. Constitutes an essential virulence factor in gas gangrene. Binds to eukaryotic membranes where it hydrolyzes both phosphatidylcholine and sphingomyelin, causing cell rupture. The diacylglycerol produced can activate both the arachidonic acid pathway, leading to modulation of the inflammatory response cascade and thrombosis, and protein kinase C, leading to activation of eukaryotic phospholipases and further membrane damage. This Clostridium perfringens protein is Phospholipase C (plc).